Here is a 495-residue protein sequence, read N- to C-terminus: Probable serine/threonine-protein kinase DDB_G0292354 (495 aa).

The region spanning Trp-16–Leu-275 is the Protein kinase domain. ATP is bound by residues Ile-22 to Ile-30 and Lys-45. Asp-136 serves as the catalytic Proton acceptor. A disordered region spans residues Glu-293–Ile-469. Low complexity-rich tracts occupy residues Gln-295 to Ala-333 and Asn-354 to Asn-364. Over residues Glu-385–Glu-395 the composition is skewed to polar residues. Low complexity predominate over residues Ser-435–Ser-466.

Belongs to the protein kinase superfamily. CK1 Ser/Thr protein kinase family.

This chain is Probable serine/threonine-protein kinase DDB_G0292354, found in Dictyostelium discoideum (Social amoeba).